A 358-amino-acid polypeptide reads, in one-letter code: Chorismate synthase (358 aa).

Residue arginine 47 coordinates NADP(+). FMN is bound by residues 124 to 126 (RSS), 240 to 241 (NA), glycine 284, 299 to 303 (KPIAT), and arginine 325.

It belongs to the chorismate synthase family. In terms of assembly, homotetramer. It depends on FMNH2 as a cofactor.

The catalysed reaction is 5-O-(1-carboxyvinyl)-3-phosphoshikimate = chorismate + phosphate. The protein operates within metabolic intermediate biosynthesis; chorismate biosynthesis; chorismate from D-erythrose 4-phosphate and phosphoenolpyruvate: step 7/7. Catalyzes the anti-1,4-elimination of the C-3 phosphate and the C-6 proR hydrogen from 5-enolpyruvylshikimate-3-phosphate (EPSP) to yield chorismate, which is the branch point compound that serves as the starting substrate for the three terminal pathways of aromatic amino acid biosynthesis. This reaction introduces a second double bond into the aromatic ring system. The chain is Chorismate synthase from Bacteroides thetaiotaomicron (strain ATCC 29148 / DSM 2079 / JCM 5827 / CCUG 10774 / NCTC 10582 / VPI-5482 / E50).